Here is a 512-residue protein sequence, read N- to C-terminus: ETS translocation variant 3 (512 aa).

A DNA-binding region (ETS) is located at residues 35 to 116 (IQLWHFILEL…KGKRFTYKFN (82 aa)). The interval 136–222 (VPQSAPPVPT…NAIGGGGIGH (87 aa)) is disordered. 3 positions are modified to phosphoserine: Ser-139, Ser-159, and Ser-315. Residues 158–184 (HSPTNDVQPGRFSASSLTASGQESSNG) are compositionally biased toward polar residues. The tract at residues 336–512 (PEESTQFSIK…QGLATAAADA (177 aa)) is disordered. A compositionally biased stretch (basic and acidic residues) spans 380-406 (IKVEPASEKDPESLRQSAREKEEHTQE). Lys-381 is covalently cross-linked (Glycyl lysine isopeptide (Lys-Gly) (interchain with G-Cter in SUMO2)). The residue at position 388 (Lys-388) is an N6-acetyllysine; alternate. A Glycyl lysine isopeptide (Lys-Gly) (interchain with G-Cter in SUMO2); alternate cross-link involves residue Lys-388. A compositionally biased stretch (acidic residues) spans 443–452 (EPLEVTEDIE). Basic and acidic residues-rich tracts occupy residues 453–468 (DRPGKEPSAPEKKEDA) and 479–491 (RWNDDPEARELSK).

This sequence belongs to the ETS family.

It localises to the nucleus. In terms of biological role, transcriptional repressor that contribute to growth arrest during terminal macrophage differentiation by repressing target genes involved in Ras-dependent proliferation. Represses MMP1 promoter activity. This chain is ETS translocation variant 3 (ETV3), found in Pan troglodytes (Chimpanzee).